A 152-amino-acid chain; its full sequence is Clitocypin-2 (152 aa).

It belongs to the protease inhibitor I48 family. In terms of assembly, homodimer. Expressed in all analyzed tissues, but expression was higher in the pileus and in the lower part of the stipe.

Functionally, binds and inhibits cysteine proteinases. Inhibits most strongly papain and cathepsin L, more weakly bromelain and cathepsin B while it is completely ineffective against cathepsin H. This chain is Clitocypin-2 (clt2), found in Clitocybe nebularis (Clouded agaric).